We begin with the raw amino-acid sequence, 452 residues long: Cobyrinate a,c-diamide synthase (452 aa).

One can recognise a GATase cobBQ-type domain in the interval 248–441; the sequence is RVAYALDAAF…LHIHFYQNLL (194 aa). Catalysis depends on cysteine 330, which acts as the Nucleophile.

This sequence belongs to the CobB/CbiA family. The cofactor is Mg(2+).

The enzyme catalyses cob(II)yrinate + 2 L-glutamine + 2 ATP + 2 H2O = cob(II)yrinate a,c diamide + 2 L-glutamate + 2 ADP + 2 phosphate + 2 H(+). The protein operates within cofactor biosynthesis; adenosylcobalamin biosynthesis; cob(II)yrinate a,c-diamide from sirohydrochlorin (anaerobic route): step 10/10. In terms of biological role, catalyzes the ATP-dependent amidation of the two carboxylate groups at positions a and c of cobyrinate, using either L-glutamine or ammonia as the nitrogen source. This chain is Cobyrinate a,c-diamide synthase, found in Listeria monocytogenes serotype 4b (strain F2365).